The sequence spans 204 residues: Somatotropin (204 aa).

The signal sequence occupies residues 1–17; it reads MDRVLLLLSVLTLGVSS. Q18 is subject to Pyrrolidone carboxylic acid. H36 provides a ligand contact to Zn(2+). A disulfide bridge connects residues C69 and C177. Zn(2+) is bound at residue E186. A disulfide bridge links C194 with C202.

It belongs to the somatotropin/prolactin family.

Its subcellular location is the secreted. Growth hormone plays an important role in growth control and is involved in the regulation of several anabolic processes. Implicated as an osmoregulatory substance important for seawater adaptation. The chain is Somatotropin (gh) from Larimichthys crocea (Large yellow croaker).